The following is a 372-amino-acid chain: Glutamate 5-kinase (372 aa).

Lys14 serves as a coordination point for ATP. Substrate contacts are provided by Ser54, Asp141, and Asn153. 173-174 (TD) provides a ligand contact to ATP. Residues 280-358 (RGHVVIDAGA…GEIETVLGYM (79 aa)) form the PUA domain.

It belongs to the glutamate 5-kinase family.

It localises to the cytoplasm. The enzyme catalyses L-glutamate + ATP = L-glutamyl 5-phosphate + ADP. It functions in the pathway amino-acid biosynthesis; L-proline biosynthesis; L-glutamate 5-semialdehyde from L-glutamate: step 1/2. In terms of biological role, catalyzes the transfer of a phosphate group to glutamate to form L-glutamate 5-phosphate. This Burkholderia vietnamiensis (strain G4 / LMG 22486) (Burkholderia cepacia (strain R1808)) protein is Glutamate 5-kinase.